A 436-amino-acid chain; its full sequence is Serine/threonine-protein kinase STK11 (436 aa).

S31 is modified (phosphoserine). N6-acetyllysine is present on residues K44 and K48. The interval 45–90 (LIGKYLMGDLLGEGSYGKVKEVLDSETLCRRAVKILKKKKLRRIPN) is sufficient for interaction with SIRT1. A Protein kinase domain is found at 49–309 (YLMGDLLGEG…IRQIRQHSWF (261 aa)). ATP contacts are provided by residues 55–63 (LGEGSYGKV) and K78. N6-acetyllysine occurs at positions 96 and 97. The active-site Proton acceptor is the D176. T189 is modified (phosphothreonine; by autocatalysis). N6-acetyllysine occurs at positions 296 and 311. Phosphoserine is present on S325. T336 is modified (phosphothreonine; by autocatalysis). T366 is subject to Phosphothreonine; by ATM and autocatalysis. Positions 398–421 (TEPQLSSKVKPEGRPGTANPARKV) are disordered. S403 carries the post-translational modification Phosphoserine. K420 is subject to N6-acetyllysine. Residue C422 is the site of S-palmitoyl cysteine attachment. K426 bears the N6-acetyllysine mark. Phosphoserine; by autocatalysis, PKA, PKC/PRKCZ and RPS6KA1 is present on S431. C433 bears the Cysteine methyl ester mark. C433 carries S-farnesyl cysteine lipidation. K434 is modified (N6-acetyllysine). The propeptide at 434–436 (KQQ) is removed in mature form.

It belongs to the protein kinase superfamily. CAMK Ser/Thr protein kinase family. LKB1 subfamily. In terms of assembly, catalytic component of a trimeric complex composed of STK11/LKB1, STRAD (STRADA or STRADB) and CAB39/MO25 (CAB39/MO25alpha or CAB39L/MO25beta): the complex tethers STK11/LKB1 in the cytoplasm and stimulates its catalytic activity. Found in a ternary complex composed of SMAD4, STK11/LKB1 and STK11IP. Interacts with p53/TP53, SMAD4, STK11IP and WDR6. Interacts with NR4A1. Interacts with NISCH; this interaction may increase STK11 activity. Interacts with PTEN, leading to PTEN phosphorylation. Interacts with SIRT1; the interaction deacetylates STK11. Interacts with CDKN1A. The cofactor is Mg(2+). Mn(2+) serves as cofactor. In terms of processing, phosphorylated by ATM at Thr-366 following ionizing radiation (IR). Phosphorylation at Ser-431 by RPS6KA1 and/or some PKA is required to inhibit cell growth. Phosphorylation at Ser-431 is also required during neuronal polarization to mediate phosphorylation of BRSK1 and BRSK2. Phosphorylation by PKC/PRKCZ at Ser-399 in isoform 2 promotes metformin (or peroxynitrite)-induced nuclear export of STK11 and activation of AMPK. UV radiation-induced phosphorylation at Thr-366 mediates CDKN1A degradation. Post-translationally, acetylated. Deacetylation at Lys-48 enhances cytoplasmic localization and kinase activity in vitro. As to expression, widely expressed. Predominantly expressed in testis (at protein level). In terms of tissue distribution, expressed in adult brain and liver and absent from tissues derived from postnatal day 7.

The protein resides in the nucleus. It localises to the cytoplasm. Its subcellular location is the membrane. It is found in the mitochondrion. It carries out the reaction L-seryl-[protein] + ATP = O-phospho-L-seryl-[protein] + ADP + H(+). The enzyme catalyses L-threonyl-[protein] + ATP = O-phospho-L-threonyl-[protein] + ADP + H(+). Activated by forming a complex with STRAD (STRADA or STRADB) and CAB39/MO25 (CAB39/MO25alpha or CAB39L/MO25beta): STRADA (or STRADB)-binding promotes a conformational change of STK11/LKB1 in an active conformation, which is stabilized by CAB39/MO25alpha (or CAB39L/MO25beta) interacting with the STK11/LKB1 activation loop. Sequestration in the nucleus by NR4A1 prevents it from phosphorylating and activating cytoplasmic AMPK. Tumor suppressor serine/threonine-protein kinase that controls the activity of AMP-activated protein kinase (AMPK) family members, thereby playing a role in various processes such as cell metabolism, cell polarity, apoptosis and DNA damage response. Acts by phosphorylating the T-loop of AMPK family proteins, thus promoting their activity: phosphorylates PRKAA1, PRKAA2, BRSK1, BRSK2, MARK1, MARK2, MARK3, MARK4, NUAK1, NUAK2, SIK1, SIK2, SIK3 and SNRK but not MELK. Also phosphorylates non-AMPK family proteins such as STRADA, PTEN and possibly p53/TP53. Acts as a key upstream regulator of AMPK by mediating phosphorylation and activation of AMPK catalytic subunits PRKAA1 and PRKAA2 and thereby regulates processes including: inhibition of signaling pathways that promote cell growth and proliferation when energy levels are low, glucose homeostasis in liver, activation of autophagy when cells undergo nutrient deprivation, and B-cell differentiation in the germinal center in response to DNA damage. Also acts as a regulator of cellular polarity by remodeling the actin cytoskeleton. Required for cortical neuron polarization by mediating phosphorylation and activation of BRSK1 and BRSK2, leading to axon initiation and specification. Involved in DNA damage response: interacts with p53/TP53 and recruited to the CDKN1A/WAF1 promoter to participate in transcription activation. Able to phosphorylate p53/TP53; the relevance of such result in vivo is however unclear and phosphorylation may be indirect and mediated by downstream STK11/LKB1 kinase NUAK1. Also acts as a mediator of p53/TP53-dependent apoptosis via interaction with p53/TP53: translocates to the mitochondrion during apoptosis and regulates p53/TP53-dependent apoptosis pathways. Regulates UV radiation-induced DNA damage response mediated by CDKN1A. In association with NUAK1, phosphorylates CDKN1A in response to UV radiation and contributes to its degradation which is necessary for optimal DNA repair. In terms of biological role, has a role in spermiogenesis. This Mus musculus (Mouse) protein is Serine/threonine-protein kinase STK11.